A 347-amino-acid polypeptide reads, in one-letter code: Bifunctional methylenetetrahydrofolate dehydrogenase/cyclohydrolase 2, mitochondrial (347 aa).

Residues 98–102 (YVRNK) and 145–147 (VQL) each bind substrate. Residues 214–216 (GRS) and Arg247 contribute to the NAD(+) site. Substrate is bound at residue 323-327 (PGGVG).

The protein belongs to the tetrahydrofolate dehydrogenase/cyclohydrolase family. Requires Mg(2+) as cofactor. As to expression, isoform 1, isoform 4 and isoform 5 are expressed in brain and placenta.

It localises to the mitochondrion inner membrane. The enzyme catalyses (6R)-5,10-methylene-5,6,7,8-tetrahydrofolate + NAD(+) = (6R)-5,10-methenyltetrahydrofolate + NADH. The catalysed reaction is (6R)-5,10-methenyltetrahydrofolate + H2O = (6R)-10-formyltetrahydrofolate + H(+). It carries out the reaction (6R)-5,10-methylene-5,6,7,8-tetrahydrofolate + NADP(+) = (6R)-5,10-methenyltetrahydrofolate + NADPH. Its pathway is one-carbon metabolism; tetrahydrofolate interconversion. Functionally, bifunctional mitochondrial folate-interconverting enzyme that has both NAD/NADP-dependent methylenetetrahydrofolate dehydrogenase and methenyltetrahydrofolate cyclohydrolase activities. The polypeptide is Bifunctional methylenetetrahydrofolate dehydrogenase/cyclohydrolase 2, mitochondrial (Homo sapiens (Human)).